The following is a 726-amino-acid chain: Transferrin (726 aa).

The first 16 residues, 1–16 (MLLCLTLLFSASAVLA), serve as a signal peptide directing secretion. 2 Transferrin-like domains span residues 29–367 (YKVC…ERDT) and 374–719 (VRFC…VIRA). 2 disulfide bridges follow: Cys-32–Cys-63 and Cys-41–Cys-54. 2 residues coordinate Fe(3+): Asp-78 and Tyr-111. Disulfide bonds link Cys-135-Cys-231, Cys-184-Cys-210, Cys-207-Cys-216, and Cys-274-Cys-287. 4 residues coordinate hydrogencarbonate: Thr-137, Arg-141, Val-143, and Gly-144. An N-linked (GlcNAc...) asparagine glycan is attached at Asn-162. Position 225 (Tyr-225) interacts with Fe(3+). 2 N-linked (GlcNAc...) asparagine glycosylation sites follow: Asn-337 and Asn-358. 2 cysteine pairs are disulfide-bonded: Cys-377-Cys-414 and Cys-387-Cys-405. Positions 429 and 457 each coordinate Fe(3+). The cysteines at positions 481 and 562 are disulfide-linked. 4 residues coordinate hydrogencarbonate: Thr-483, Arg-487, Ala-489, and Gly-490. Fe(3+)-binding residues include Tyr-573 and His-642.

The protein belongs to the transferrin family.

Its subcellular location is the secreted. Its function is as follows. Transferrins are iron binding transport proteins which bind Fe(3+) ion in association with the binding of an anion, usually bicarbonate. The protein is Transferrin of Blaberus discoidalis (Tropical cockroach).